The primary structure comprises 200 residues: Holliday junction resolvase RecU (200 aa).

Residues 1–24 (MTIRYPNGKRYDQASQPHKTPIKK) are disordered. 4 residues coordinate Mg(2+): Thr-85, Asp-87, Glu-100, and Gln-119.

The protein belongs to the RecU family. Requires Mg(2+) as cofactor.

Its subcellular location is the cytoplasm. The enzyme catalyses Endonucleolytic cleavage at a junction such as a reciprocal single-stranded crossover between two homologous DNA duplexes (Holliday junction).. In terms of biological role, endonuclease that resolves Holliday junction intermediates in genetic recombination. Cleaves mobile four-strand junctions by introducing symmetrical nicks in paired strands. Promotes annealing of linear ssDNA with homologous dsDNA. Required for DNA repair, homologous recombination and chromosome segregation. The protein is Holliday junction resolvase RecU of Bacillus mycoides (strain KBAB4) (Bacillus weihenstephanensis).